Here is a 242-residue protein sequence, read N- to C-terminus: Adenosine 5'-phosphosulfate reductase (242 aa).

Residues C125, C126, C208, and C211 each contribute to the [4Fe-4S] cluster site. Residue C234 is the Nucleophile; cysteine thiosulfonate intermediate of the active site.

The protein belongs to the PAPS reductase family. CysH subfamily. [4Fe-4S] cluster is required as a cofactor.

It is found in the cytoplasm. It carries out the reaction [thioredoxin]-disulfide + sulfite + AMP + 2 H(+) = adenosine 5'-phosphosulfate + [thioredoxin]-dithiol. Its pathway is sulfur metabolism; hydrogen sulfide biosynthesis; sulfite from sulfate. Catalyzes the formation of sulfite from adenosine 5'-phosphosulfate (APS) using thioredoxin as an electron donor. The polypeptide is Adenosine 5'-phosphosulfate reductase (Staphylococcus saprophyticus subsp. saprophyticus (strain ATCC 15305 / DSM 20229 / NCIMB 8711 / NCTC 7292 / S-41)).